The sequence spans 885 residues: Putative membrane protein YdgH (885 aa).

The next 7 membrane-spanning stretches (helical) occupy residues 9 to 29 (WAIAAIVLALTVVLSLFSPNL), 181 to 201 (IIGLLLIVFRSVVTPFIPIVV), 202 to 222 (VGFSYLISQSILGILVYNVDF), 227 to 247 (FTQTFLVAILFGIGTDYCILL), 278 to 298 (ISGFAVLIGFSALGFAKFAIF), 304 to 324 (VAVGVGILMIILYTLLPLFMV), and 354 to 374 (VARPFLFIVITVVITLPFILT). Residues 498-518 (MAGQTGSASNGGSGGSLGDAA) form a disordered region. Transmembrane regions (helical) follow at residues 716-736 (MVIMIIGLFIVLTILFRSMIM), 740-760 (MIASLLLTYYTSISITELIFV), 772-792 (VPFFSFVILIALGVDYSIFLL), 817-837 (VIITAAIILAGTFAAMMPSGV), and 847-867 (IIIGLLLYGLVILPLFIPAII).

The protein belongs to the resistance-nodulation-cell division (RND) (TC 2.A.6) family. MmpL subfamily.

Its subcellular location is the cell membrane. The protein is Putative membrane protein YdgH (ydgH) of Bacillus subtilis (strain 168).